Reading from the N-terminus, the 133-residue chain is ATP synthase epsilon chain (133 aa).

The tract at residues 81-110 (AAERPEQIDTERARKAKERAEQRLASEHVD) is disordered.

Belongs to the ATPase epsilon chain family. F-type ATPases have 2 components, CF(1) - the catalytic core - and CF(0) - the membrane proton channel. CF(1) has five subunits: alpha(3), beta(3), gamma(1), delta(1), epsilon(1). CF(0) has three main subunits: a, b and c.

It localises to the cell membrane. Produces ATP from ADP in the presence of a proton gradient across the membrane. The chain is ATP synthase epsilon chain from Shouchella clausii (strain KSM-K16) (Alkalihalobacillus clausii).